We begin with the raw amino-acid sequence, 29 residues long: Trypsin inhibitor 2 (29 aa).

3 disulfide bridges follow: Cys3-Cys20, Cys10-Cys22, and Cys16-Cys28.

The protein belongs to the protease inhibitor I7 (squash-type serine protease inhibitor) family.

Its subcellular location is the secreted. Inhibits trypsin. This chain is Trypsin inhibitor 2, found in Bryonia dioica (Red bryony).